Reading from the N-terminus, the 455-residue chain is Asparagine--tRNA ligase (455 aa).

The protein belongs to the class-II aminoacyl-tRNA synthetase family. As to quaternary structure, homodimer.

It is found in the cytoplasm. The catalysed reaction is tRNA(Asn) + L-asparagine + ATP = L-asparaginyl-tRNA(Asn) + AMP + diphosphate + H(+). In Mycoplasma pneumoniae (strain ATCC 29342 / M129 / Subtype 1) (Mycoplasmoides pneumoniae), this protein is Asparagine--tRNA ligase.